Reading from the N-terminus, the 166-residue chain is Cofilin-2 (166 aa).

A2 bears the N-acetylalanine mark. S3 bears the Phosphoserine mark. An ADF-H domain is found at 4 to 153 (GVTVNDEVIK…KDRSTLGEKL (150 aa)). T6 bears the Phosphothreonine mark. Positions 30-34 (KKRKK) match the Nuclear localization signal motif.

It belongs to the actin-binding proteins ADF family. In terms of assembly, interacts with CSRP3; possibly two molecules of CFL2 can interact with one molecule if CSRP3. In terms of processing, the phosphorylation of Ser-24 may prevent recognition of the nuclear localization signal. As to expression, predominantly expressed in skeletal muscle.

It is found in the nucleus matrix. Its subcellular location is the cytoplasm. The protein localises to the cytoskeleton. Functionally, controls reversibly actin polymerization and depolymerization in a pH-sensitive manner. It has the ability to bind G- and F-actin in a 1:1 ratio of cofilin to actin. It is the major component of intranuclear and cytoplasmic actin rods. Required for muscle maintenance. May play a role during the exchange of alpha-actin forms during the early postnatal remodeling of the sarcomere. The chain is Cofilin-2 (Cfl2) from Mus musculus (Mouse).